The following is an 842-amino-acid chain: DNA topoisomerase-like protein cin-4 (842 aa).

The span at 1 to 26 (MSEEDRNVFTSIDKKGGGSKQMDDLN) shows a compositional bias: basic and acidic residues. Positions 1-50 (MSEEDRNVFTSIDKKGGGSKQMDDLNQKCPKRKTSKLKGIPKLEDANDAG) are disordered. Residues 314 to 783 (IPCLVDGLKP…TWQDLWITDL (470 aa)) form the Topo IIA-type catalytic domain.

Belongs to the type II topoisomerase family.

Functionally, plays a role in the removal of cohesin from kinetochores on mitotic chromosomes and is required for centromere resolution. The protein is DNA topoisomerase-like protein cin-4 of Caenorhabditis elegans.